We begin with the raw amino-acid sequence, 338 residues long: MYG1 protein YER156C (338 aa).

The protein belongs to the MYG1 family.

This chain is MYG1 protein YER156C, found in Saccharomyces cerevisiae (strain ATCC 204508 / S288c) (Baker's yeast).